Consider the following 305-residue polypeptide: Ribonuclease Z (305 aa).

The Zn(2+) site is built by histidine 61, histidine 63, aspartate 65, histidine 66, histidine 138, aspartate 208, and histidine 266. The active-site Proton acceptor is aspartate 65.

This sequence belongs to the RNase Z family. As to quaternary structure, homodimer. Zn(2+) is required as a cofactor.

It catalyses the reaction Endonucleolytic cleavage of RNA, removing extra 3' nucleotides from tRNA precursor, generating 3' termini of tRNAs. A 3'-hydroxy group is left at the tRNA terminus and a 5'-phosphoryl group is left at the trailer molecule.. In terms of biological role, zinc phosphodiesterase, which displays some tRNA 3'-processing endonuclease activity. Probably involved in tRNA maturation, by removing a 3'-trailer from precursor tRNA. In Methanosarcina acetivorans (strain ATCC 35395 / DSM 2834 / JCM 12185 / C2A), this protein is Ribonuclease Z.